Here is a 378-residue protein sequence, read N- to C-terminus: UPF0754 membrane protein Exig_0680 (378 aa).

The next 2 helical transmembrane spans lie at valine 5–threonine 25 and isoleucine 357–isoleucine 377.

This sequence belongs to the UPF0754 family.

It is found in the cell membrane. This is UPF0754 membrane protein Exig_0680 from Exiguobacterium sibiricum (strain DSM 17290 / CCUG 55495 / CIP 109462 / JCM 13490 / 255-15).